Consider the following 365-residue polypeptide: Probable protein kinase At2g41970 (365 aa).

The disordered stretch occupies residues 1-50 (MFCCGGADEEPAGPPANQYAAPPNKAGNPNFGGGNRGEPRNPNAPRSGAP). A Protein kinase domain is found at 73 to 354 (FGNKALIGEG…IVVKALQPLL (282 aa)). Residues 79 to 87 (IGEGSYGRV) and Lys100 contribute to the ATP site. Position 146 is a phosphotyrosine (Tyr146). Asp204 functions as the Proton acceptor in the catalytic mechanism. Residues Ser208 and Ser238 each carry the phosphoserine modification. Phosphothreonine is present on residues Thr239 and Thr244. A Phosphotyrosine modification is found at Tyr252.

The protein belongs to the protein kinase superfamily. Tyr protein kinase family.

This Arabidopsis thaliana (Mouse-ear cress) protein is Probable protein kinase At2g41970.